The chain runs to 1072 residues: Zn(2)-C6 fungal-type transcription factor FTF1a (1072 aa).

A DNA-binding region (zn(2)-C6 fungal-type) is located at residues 178 to 205 (CMACRRKKIRCSGEKPACKHCLRSRILC).

It localises to the nucleus. Functionally, zn(2)-C6 fungal-type transcription factor that has a role in the establishment of the fungus within the plant and/or the progress of the disease. Regulates the expression of virulence factors such as SIX1 and SIX6. In Fusarium oxysporum f. sp. lycopersici (strain 4287 / CBS 123668 / FGSC 9935 / NRRL 34936) (Fusarium vascular wilt of tomato), this protein is Zn(2)-C6 fungal-type transcription factor FTF1a.